The sequence spans 309 residues: MGSSLSEPCIYDKLSESIDILRQSGYRYGMSEREIEKFIKQVLETNEPRREPPQFPILRATVKFVVAVGVVLMAVLVFTYPQSPVLMGSVSGTTLNNSSPLSHIRLLELPIAEKYNLHGFHEWWASSSLQTMDLNCSACTDVTDILELTDQLRTSAGEHTRTQPLLLKGGAALSLRVSQMDQFSSVSQTPANFTLLWSVSSRPRESVLQWLFPESERCPLLEIWSSTLQRCRLSSRRPQPSRVQVLGWMVVADGSPDVRLLPVQRCRKHCRSFSLRLEPGDMVFADSQIWLMELSPSGAQDVQCDSAVL.

Residues 1 to 59 (MGSSLSEPCIYDKLSESIDILRQSGYRYGMSEREIEKFIKQVLETNEPRREPPQFPILR) are Cytoplasmic-facing. Residues 60–80 (ATVKFVVAVGVVLMAVLVFTY) form a helical membrane-spanning segment. Residues 81 to 309 (PQSPVLMGSV…QDVQCDSAVL (229 aa)) lie on the Extracellular side of the membrane.

Homodimer.

It is found in the golgi apparatus membrane. The protein localises to the cytoplasm. Its function is as follows. Exhibits histone deacetylase (HDAC) enhancer properties. May play a role in progression through the cell cycle. This Danio rerio (Zebrafish) protein is Bombesin receptor-activated protein C6orf89 homolog.